The primary structure comprises 336 residues: Cytoskeleton protein RodZ (336 aa).

The Cytoplasmic segment spans residues 1–111 (MNTEATHDQN…LGKRRKKRDG (111 aa)). Residues 19–71 (LRNAREQLGLSQQAVAERLCLKVSTVRDIEEDKAPADLASTFLRGYIRSYARL) enclose the HTH cro/C1-type domain. Residues 30–49 (QQAVAERLCLKVSTVRDIEE) constitute a DNA-binding region (H-T-H motif). Residues 112–132 (WLMTFTWLVLFVVIGLSGAWW) traverse the membrane as a helical; Signal-anchor for type II membrane protein segment. The Periplasmic portion of the chain corresponds to 133-336 (WQDHKAQQEE…TLNAEQSPAQ (204 aa)). Residues 148 to 164 (DQSSAELNNNQSQSVPL) show a composition bias toward polar residues. The segment at 148–248 (DQSSAELNNN…TDQAGVTTPA (101 aa)) is disordered. Low complexity predominate over residues 165-201 (DTSTTTDQAMATTPTSPVDTTATNTQTPAATTAPSPT). A compositionally biased stretch (polar residues) spans 202–217 (VDSQQNAVVPPSQANV). Residues 219-236 (TAATPAPAATTMPDGAAP) are compositionally biased toward low complexity.

It belongs to the RodZ family.

It is found in the cell inner membrane. In terms of biological role, cytoskeletal protein that is involved in cell-shape control through regulation of the length of the long axis. The chain is Cytoskeleton protein RodZ from Escherichia coli (strain SMS-3-5 / SECEC).